The primary structure comprises 363 residues: Adenosine deaminase (363 aa).

The Zn(2+) site is built by His42 and His44. Residues 44 to 46 (HLD), Asp172, and Gly201 each bind a purine D-ribonucleoside. The interval 170–184 (IGDTGHEAANIKASA) is gating helix loop; regulates binding affinity for substrates and thus substrate selectivity. Position 226 (His226) interacts with Zn(2+). A purine D-ribonucleoside is bound by residues Glu229, His253, and Asp310. Asp310 lines the Zn(2+) pocket.

Belongs to the metallo-dependent hydrolases superfamily. Adenosine and AMP deaminases family. Zn(2+) is required as a cofactor.

It catalyses the reaction adenosine + H2O + H(+) = inosine + NH4(+). It carries out the reaction S-methyl-5'-thioadenosine + H2O + H(+) = S-methyl-5'-thioinosine + NH4(+). Its pathway is purine metabolism; purine nucleoside salvage. With respect to regulation, inhibited by coformycin and methylthiocoformycin (MT-coformycin). Its function is as follows. Catalyzes the hydrolytic deamination of adenosine to produce inosine. Unlike mammalian adenosine deaminases, also catalyzes the deamination of 5'-methylthioadenosine (MTA), a by-product of polyamine biosynthesis, to produce 5'-methylthioinosine (MTI). Plays an essential role in the purine salvage pathway which allows the parasite to use host cell purines for the synthesis of nucleic acids. The protein is Adenosine deaminase of Plasmodium vivax (strain Salvador I).